We begin with the raw amino-acid sequence, 331 residues long: Probable staphylococcal-like nuclease CAN1 (331 aa).

A lipid anchor (N-myristoyl glycine) is attached at Gly2. Cys10 carries the S-palmitoyl cysteine lipid modification. In terms of domain architecture, TNase-like spans 136–313 (HTLPVDAKAV…QSGRKGLWAA (178 aa)). Asp149 is a binding site for Ca(2+). Arg220 is an active-site residue. Asp225 is a Ca(2+) binding site. Residues Glu228 and Arg262 contribute to the active site. Positions 306–331 (GRKGLWAASRPQKPWEWRRDKRNGTA) are disordered. Residues 318–331 (KPWEWRRDKRNGTA) are compositionally biased toward basic and acidic residues.

This sequence belongs to the thermonuclease family. Ca(2+) is required as a cofactor.

It localises to the cell membrane. Its function is as follows. Enzyme that catalyzes the hydrolysis of both DNA and RNA at the 5' position of the phosphodiester bond. This chain is Probable staphylococcal-like nuclease CAN1, found in Oryza sativa subsp. japonica (Rice).